The sequence spans 234 residues: uncharacterized protein (234 aa).

Residues 13–32 (KSINYYIFFFQYTLVYNTIQ) form a helical membrane-spanning segment. 2 disordered regions span residues 102-130 (HSKT…SSNS) and 159-185 (ESDS…SEYE). Residues 103-130 (SKTTSLPFSSSSPQSSSSSSSSSSSSNS) are compositionally biased toward low complexity. Residues 167-185 (EFDSESNSDFDSESESEYE) are compositionally biased toward acidic residues.

The protein localises to the membrane. This is an uncharacterized protein from Dictyostelium discoideum (Social amoeba).